The primary structure comprises 417 residues: Serine hydroxymethyltransferase 2 (417 aa).

(6S)-5,6,7,8-tetrahydrofolate contacts are provided by residues L121 and 125-127 (GHL). The residue at position 230 (K230) is an N6-(pyridoxal phosphate)lysine. 355–357 (SPF) contributes to the (6S)-5,6,7,8-tetrahydrofolate binding site.

It belongs to the SHMT family. In terms of assembly, homodimer. Pyridoxal 5'-phosphate is required as a cofactor.

It is found in the cytoplasm. The catalysed reaction is (6R)-5,10-methylene-5,6,7,8-tetrahydrofolate + glycine + H2O = (6S)-5,6,7,8-tetrahydrofolate + L-serine. Its pathway is one-carbon metabolism; tetrahydrofolate interconversion. It participates in amino-acid biosynthesis; glycine biosynthesis; glycine from L-serine: step 1/1. Functionally, catalyzes the reversible interconversion of serine and glycine with tetrahydrofolate (THF) serving as the one-carbon carrier. This reaction serves as the major source of one-carbon groups required for the biosynthesis of purines, thymidylate, methionine, and other important biomolecules. Also exhibits THF-independent aldolase activity toward beta-hydroxyamino acids, producing glycine and aldehydes, via a retro-aldol mechanism. The sequence is that of Serine hydroxymethyltransferase 2 from Colwellia psychrerythraea (strain 34H / ATCC BAA-681) (Vibrio psychroerythus).